The chain runs to 428 residues: Enolase (428 aa).

Position 163 (Q163) interacts with (2R)-2-phosphoglycerate. E205 serves as the catalytic Proton donor. Positions 242, 285, and 312 each coordinate Mg(2+). Residues K337, R366, S367, and K388 each coordinate (2R)-2-phosphoglycerate. K337 (proton acceptor) is an active-site residue.

It belongs to the enolase family. Requires Mg(2+) as cofactor.

The protein resides in the cytoplasm. Its subcellular location is the secreted. The protein localises to the cell surface. It catalyses the reaction (2R)-2-phosphoglycerate = phosphoenolpyruvate + H2O. It functions in the pathway carbohydrate degradation; glycolysis; pyruvate from D-glyceraldehyde 3-phosphate: step 4/5. Functionally, catalyzes the reversible conversion of 2-phosphoglycerate (2-PG) into phosphoenolpyruvate (PEP). It is essential for the degradation of carbohydrates via glycolysis. This is Enolase from Brevibacillus brevis (strain 47 / JCM 6285 / NBRC 100599).